The chain runs to 405 residues: Phosphoglycerate kinase (405 aa).

Residues 24 to 26 (DFN), Arg40, 63 to 66 (HLGR), Arg122, and Arg162 each bind substrate. Residues Lys212, Glu331, and 361-364 (GGDS) each bind ATP.

This sequence belongs to the phosphoglycerate kinase family. In terms of assembly, monomer.

It is found in the cytoplasm. The catalysed reaction is (2R)-3-phosphoglycerate + ATP = (2R)-3-phospho-glyceroyl phosphate + ADP. It functions in the pathway carbohydrate degradation; glycolysis; pyruvate from D-glyceraldehyde 3-phosphate: step 2/5. This is Phosphoglycerate kinase from Corynebacterium glutamicum (strain R).